We begin with the raw amino-acid sequence, 85 residues long: MADDHPQDKAERERIFKRFDANGDGKISAAELGEALKTLGSITPDEVKHMMAEIDTDGDGFISFQEFTDFGRANRGLLKDVAKIF.

EF-hand domains follow at residues 7–42 (QDKAERERIFKRFDANGDGKISAAELGEALKTLGSI) and 42–77 (ITPDEVKHMMAEIDTDGDGFISFQEFTDFGRANRGL). Residues D20, N22, D24, K26, E31, D55, D57, D59, and E66 each contribute to the Ca(2+) site.

In terms of assembly, monomer.

This chain is Polcalcin Bet v 4 (BETV4), found in Betula pendula (European white birch).